Consider the following 268-residue polypeptide: 3-methyl-2-oxobutanoate hydroxymethyltransferase (268 aa).

Mg(2+) contacts are provided by aspartate 41 and aspartate 80. 3-methyl-2-oxobutanoate-binding positions include 41–42 (DS), aspartate 80, and lysine 110. Glutamate 112 is a Mg(2+) binding site. The active-site Proton acceptor is glutamate 178.

Belongs to the PanB family. As to quaternary structure, homodecamer; pentamer of dimers. It depends on Mg(2+) as a cofactor.

It localises to the cytoplasm. The enzyme catalyses 3-methyl-2-oxobutanoate + (6R)-5,10-methylene-5,6,7,8-tetrahydrofolate + H2O = 2-dehydropantoate + (6S)-5,6,7,8-tetrahydrofolate. Its pathway is cofactor biosynthesis; coenzyme A biosynthesis. Its function is as follows. Catalyzes the reversible reaction in which hydroxymethyl group from 5,10-methylenetetrahydrofolate is transferred onto alpha-ketoisovalerate to form ketopantoate. This chain is 3-methyl-2-oxobutanoate hydroxymethyltransferase, found in Natronomonas pharaonis (strain ATCC 35678 / DSM 2160 / CIP 103997 / JCM 8858 / NBRC 14720 / NCIMB 2260 / Gabara) (Halobacterium pharaonis).